We begin with the raw amino-acid sequence, 119 residues long: Protein Wnt-4 (119 aa).

Serine 1 is lipidated: O-palmitoleoyl serine; by PORCN. Cystine bridges form between cysteine 69/cysteine 100 and cysteine 85/cysteine 95. A glycan (N-linked (GlcNAc...) asparagine) is linked at asparagine 86.

Belongs to the Wnt family. Palmitoleoylation is required for efficient binding to frizzled receptors. Depalmitoleoylation leads to Wnt signaling pathway inhibition.

The protein localises to the secreted. It is found in the extracellular space. It localises to the extracellular matrix. Its function is as follows. Ligand for members of the frizzled family of seven transmembrane receptors. Plays an important role in embryonic development. This Sceloporus occidentalis (Western fence lizard) protein is Protein Wnt-4 (WNT-4).